Consider the following 135-residue polypeptide: Large-conductance mechanosensitive channel (135 aa).

The next 2 membrane-spanning stretches (helical) occupy residues 10 to 30 (FAMRGNVIDMAVGVVIGGAFG) and 76 to 96 (GSFIQTMVDFLIIAFCIFCVI).

The protein belongs to the MscL family. Homopentamer.

Its subcellular location is the cell inner membrane. Channel that opens in response to stretch forces in the membrane lipid bilayer. May participate in the regulation of osmotic pressure changes within the cell. The polypeptide is Large-conductance mechanosensitive channel (Campylobacter concisus (strain 13826)).